Consider the following 227-residue polypeptide: Chloronitrobenzene nitroreductase (227 aa).

14–18 (RRTKR) provides a ligand contact to FMN. Ser-44 contacts NADP(+). FMN contacts are provided by residues 172-173 (GL) and Arg-215.

It belongs to the nitroreductase family. The cofactor is FMN.

It carries out the reaction N-phenylhydroxylamine + 2 NADP(+) + H2O = nitrobenzene + 2 NADPH + 2 H(+). The protein operates within xenobiotic degradation; nitrobenzene degradation. It participates in xenobiotic degradation; 4-chloronitrobenzene degradation. In terms of biological role, involved in the biodegradation of chlorinated nitroaromatic compounds. Catalyzes the reduction of 4-chloronitrobenzene to yield 1-hydroxylamino-4-chlorobenzene. Probably also able to catalyze the two-electron reduction of nitrobenzene (NB) to produce a nitrosobenzene (NOB) intermediate, which is immediately reduced to hydroxylaminobenzene (HAB) by a second two-electron transfer. This chain is Chloronitrobenzene nitroreductase, found in Comamonas testosteroni (Pseudomonas testosteroni).